Reading from the N-terminus, the 1403-residue chain is Nidogen-2 (1403 aa).

The N-terminal stretch at 1 to 30 (MFRDPTAGWLTPPSPLSLLVMLLLLSRVGA) is a signal peptide. The NIDO domain maps to 108 to 274 (PFLADIDTSH…GVWAFHIGSR (167 aa)). Residues 323-403 (EDVEYPPVEP…KQGRPVGEGE (81 aa)) are disordered. 2 O-linked (Xyl...) (chondroitin sulfate) serine glycosylation sites follow: Ser386 and Ser475. The segment covering 386–395 (SASLDPQTKQ) has biased composition (polar residues). The region spanning 507–547 (NLETCEHSHGRCSQHAFCTDYTTGFCCHCQSRFYGNGKHCL) is the EGF-like 1 domain. 3 disulfide bridges follow: Cys511–Cys524, Cys518–Cys533, and Cys535–Cys546. A Nidogen G2 beta-barrel domain is found at 551 to 781 (APHRVNGKVS…GPVEVDSAPV (231 aa)). N-linked (GlcNAc...) asparagine glycosylation is found at Asn681, Asn716, and Asn726. Positions 782–823 (GVNPCYDGSHTCDTTARCHPGTGVDYTCECTPGFQGDGRSCV) constitute an EGF-like 2 domain. Disulfide bonds link Cys786–Cys799, Cys793–Cys809, Cys811–Cys822, Cys828–Cys841, Cys835–Cys850, Cys852–Cys865, Cys875–Cys890, Cys882–Cys900, Cys902–Cys913, Cys919–Cys930, Cys924–Cys939, Cys941–Cys952, Cys968–Cys991, Cys1002–Cys1009, Cys1011–Cys1033, Cys1047–Cys1071, Cys1082–Cys1089, and Cys1091–Cys1112. In terms of domain architecture, EGF-like 3; calcium-binding spans 824–862 (DVNECATGFHRCGPNSVCVNLVGSYRCECRSGYEFADDQ). Residues 871 to 914 (PPNPCLDGSHTCAPEGQARCIHHGGSSFSCACLPGFIGTGHQCS) form the EGF-like 4 domain. An EGF-like 5; calcium-binding domain is found at 915–953 (DVDECAENRCHEAAICYNTPGSFSCRCQPGYRGDGFHCT). Residues 946-948 (RGD) carry the Cell attachment site motif. Thyroglobulin type-1 domains are found at residues 965 to 1033 (LKPC…PPHC) and 1044 to 1112 (RTVC…RPAC). The disordered stretch occupies residues 1021-1043 (GTQTPPGSTPPHCGPPPEPTQRP). Pro residues predominate over residues 1027 to 1040 (GSTPPHCGPPPEPT). N-linked (GlcNAc...) asparagine glycosylation occurs at Asn1152. LDL-receptor class B repeat units lie at residues 1182–1225 (RMVY…DHFR), 1226–1268 (RTMY…DPIR), 1269–1313 (GNLY…DPFS), 1314–1355 (KLLC…YADH), and 1357–1401 (YHTD…CPTG). Arg1336 carries the post-translational modification Omega-N-methylarginine.

Interacts with LAMA2. Interacts with COL13A1. Interacts with EFEMP2. In terms of processing, highly N- and O-glycosylated.

The protein resides in the secreted. Its subcellular location is the extracellular space. It localises to the extracellular matrix. The protein localises to the basement membrane. Functionally, cell adhesion glycoprotein. Might be involved in osteoblast differentiation. It probably has a role in cell-extracellular matrix interactions. In Mus musculus (Mouse), this protein is Nidogen-2 (Nid2).